A 121-amino-acid polypeptide reads, in one-letter code: uncharacterized protein (121 aa).

3 consecutive transmembrane segments (helical) span residues 1–21 (MILW…IMPV), 55–75 (LKYI…FCSI), and 92–112 (LFFK…IHFL).

Its subcellular location is the membrane. This is an uncharacterized protein from Saccharomyces cerevisiae (strain ATCC 204508 / S288c) (Baker's yeast).